The primary structure comprises 452 residues: Coproporphyrinogen III oxidase (452 aa).

FAD contacts are provided by residues 10–15, 36–37, 58–61, Val-242, Trp-390, and 426–428; these read GGGISG, EP, GAEA, and IGV.

The protein belongs to the protoporphyrinogen/coproporphyrinogen oxidase family. Coproporphyrinogen III oxidase subfamily. FAD is required as a cofactor.

Its subcellular location is the cytoplasm. It carries out the reaction coproporphyrinogen III + 3 O2 = coproporphyrin III + 3 H2O2. It functions in the pathway porphyrin-containing compound metabolism; protoheme biosynthesis. Functionally, involved in coproporphyrin-dependent heme b biosynthesis. Catalyzes the oxidation of coproporphyrinogen III to coproporphyrin III. The polypeptide is Coproporphyrinogen III oxidase (Mycobacterium bovis (strain ATCC BAA-935 / AF2122/97)).